The primary structure comprises 929 residues: Ras guanine nucleotide exchange factor M (929 aa).

Residues 1-15 are compositionally biased toward polar residues; it reads MWQKPSLTKSMMNEV. Disordered regions lie at residues 1–102 and 169–316; these read MWQK…AAGS and TNNN…SKSL. Over residues 16 to 33 the composition is skewed to low complexity; sequence SSNSPKSPTLTSSPSTQS. Positions 44–67 are enriched in gly residues; sequence LDGGGGGSNRLIFGGSGGGSGGGS. Composition is skewed to low complexity over residues 68 to 80 and 169 to 191; these read LPSSPVSSPVNPF and TNNNTTTTTNTNNSNNNNSNNDG. Gly residues predominate over residues 192–202; that stretch reads SGSGSGAGGSF. Low complexity predominate over residues 203-246; sequence IGTTTSAKTTSTTSTSAATTTTTTTTSSSSSSPSSSSPSSTSPT. Residues 247 to 256 are compositionally biased toward polar residues; it reads IASNNDNNNK. Over residues 270-287 the composition is skewed to low complexity; sequence PPLTLSQSQTQQQQQQKV. Residues 295 to 305 are compositionally biased toward polar residues; sequence RFSTNSSGSQS. The N-terminal Ras-GEF domain maps to 390-528; the sequence is NKFVVVSGPK…PILDLYEKLK (139 aa). The disordered stretch occupies residues 540 to 583; that stretch reads SLSGSGGISNNNNGSDLKNSNNGNNSSNNNNSSSNSSSSSSSSD. A Ras-GEF domain is found at 676–911; sequence SPQDIAKQLT…YAFSKFIESP (236 aa).

In terms of biological role, promotes the exchange of Ras-bound GDP by GTP. The chain is Ras guanine nucleotide exchange factor M (gefM) from Dictyostelium discoideum (Social amoeba).